A 225-amino-acid polypeptide reads, in one-letter code: Ribose-5-phosphate isomerase A (225 aa).

Substrate contacts are provided by residues 26-29 (TGST), 82-85 (DGAD), and 95-98 (KGGG). The active-site Proton acceptor is Glu104. Position 122 (Lys122) interacts with substrate.

It belongs to the ribose 5-phosphate isomerase family. Homodimer.

It catalyses the reaction aldehydo-D-ribose 5-phosphate = D-ribulose 5-phosphate. Its pathway is carbohydrate degradation; pentose phosphate pathway; D-ribose 5-phosphate from D-ribulose 5-phosphate (non-oxidative stage): step 1/1. In terms of biological role, catalyzes the reversible conversion of ribose-5-phosphate to ribulose 5-phosphate. This is Ribose-5-phosphate isomerase A from Streptococcus gordonii (strain Challis / ATCC 35105 / BCRC 15272 / CH1 / DL1 / V288).